Here is a 375-residue protein sequence, read N- to C-terminus: Peptide chain release factor 1 (375 aa).

Gln237 carries the post-translational modification N5-methylglutamine. The segment covering 289-299 has biased composition (basic and acidic residues); the sequence is AAREAQERQER. Residues 289–326 form a disordered region; it reads AAREAQERQERASQVGSGDRSEKIRTYNYPQNRVTDHR.

It belongs to the prokaryotic/mitochondrial release factor family. Post-translationally, methylated by PrmC. Methylation increases the termination efficiency of RF1.

Its subcellular location is the cytoplasm. Peptide chain release factor 1 directs the termination of translation in response to the peptide chain termination codons UAG and UAA. In Deinococcus radiodurans (strain ATCC 13939 / DSM 20539 / JCM 16871 / CCUG 27074 / LMG 4051 / NBRC 15346 / NCIMB 9279 / VKM B-1422 / R1), this protein is Peptide chain release factor 1 (prfA).